A 237-amino-acid polypeptide reads, in one-letter code: Ribonuclease 3 (237 aa).

The region spanning 4-133 is the RNase III domain; it reads LTELEKSLGV…VLAAIYLDKG (130 aa). Glu46 contacts Mg(2+). Residues Asp50 and Glu122 contribute to the active site. Position 122 (Glu122) interacts with Mg(2+). The DRBM domain maps to 160–229; that stretch reads DYKSRLQELV…AKEALQQFEN (70 aa).

The protein belongs to the ribonuclease III family. As to quaternary structure, homodimer. Requires Mg(2+) as cofactor.

It is found in the cytoplasm. The catalysed reaction is Endonucleolytic cleavage to 5'-phosphomonoester.. In terms of biological role, digests double-stranded RNA. Involved in the processing of primary rRNA transcript to yield the immediate precursors to the large and small rRNAs (23S and 16S). Processes some mRNAs, and tRNAs when they are encoded in the rRNA operon. Processes pre-crRNA and tracrRNA of type II CRISPR loci if present in the organism. This chain is Ribonuclease 3, found in Dehalococcoides mccartyi (strain ATCC BAA-2266 / KCTC 15142 / 195) (Dehalococcoides ethenogenes (strain 195)).